The sequence spans 502 residues: Lysine--tRNA ligase (502 aa).

Mg(2+) is bound by residues E411 and E418.

The protein belongs to the class-II aminoacyl-tRNA synthetase family. As to quaternary structure, homodimer. Mg(2+) is required as a cofactor.

It localises to the cytoplasm. The catalysed reaction is tRNA(Lys) + L-lysine + ATP = L-lysyl-tRNA(Lys) + AMP + diphosphate. In Chromohalobacter salexigens (strain ATCC BAA-138 / DSM 3043 / CIP 106854 / NCIMB 13768 / 1H11), this protein is Lysine--tRNA ligase.